The following is an 865-amino-acid chain: Lactose regulatory protein LAC9 (865 aa).

A compositionally biased stretch (polar residues) spans 1 to 15; the sequence is MGSRASNSPSFSSKA. The disordered stretch occupies residues 1–87; the sequence is MGSRASNSPS…NNNNNNNKKS (87 aa). Basic and acidic residues predominate over residues 22–34; it reads EYKKNAVKKETIR. The span at 67-85 shows a compositional bias: low complexity; sequence SNGNKNDSNANNNNNNNNK. Positions 95, 98, 105, 112, 115, and 122 each coordinate Zn(2+). The zn(2)-C6 fungal-type DNA-binding region spans 95–122; sequence CDACRKKKWKCSKTVPTCTNCLKYNLDC. The interval 818 to 840 is disordered; that stretch reads LQSSTTQMRPPTTSGWPDTNNFL.

The protein resides in the nucleus. In terms of biological role, positive regulatory protein, that controls induction of the lactose-galactose regulation of Kluyveromyces lactis. The chain is Lactose regulatory protein LAC9 (LAC9) from Kluyveromyces lactis (strain ATCC 8585 / CBS 2359 / DSM 70799 / NBRC 1267 / NRRL Y-1140 / WM37) (Yeast).